The following is a 352-amino-acid chain: N-acetyl-gamma-glutamyl-phosphate reductase (352 aa).

Cys149 is an active-site residue.

This sequence belongs to the NAGSA dehydrogenase family. Type 1 subfamily.

The protein resides in the cytoplasm. The catalysed reaction is N-acetyl-L-glutamate 5-semialdehyde + phosphate + NADP(+) = N-acetyl-L-glutamyl 5-phosphate + NADPH + H(+). Its pathway is amino-acid biosynthesis; L-arginine biosynthesis; N(2)-acetyl-L-ornithine from L-glutamate: step 3/4. In terms of biological role, catalyzes the NADPH-dependent reduction of N-acetyl-5-glutamyl phosphate to yield N-acetyl-L-glutamate 5-semialdehyde. This chain is N-acetyl-gamma-glutamyl-phosphate reductase, found in Polynucleobacter asymbioticus (strain DSM 18221 / CIP 109841 / QLW-P1DMWA-1) (Polynucleobacter necessarius subsp. asymbioticus).